A 132-amino-acid chain; its full sequence is ATP synthase epsilon chain (132 aa).

It belongs to the ATPase epsilon chain family. In terms of assembly, F-type ATPases have 2 components, CF(1) - the catalytic core - and CF(0) - the membrane proton channel. CF(1) has five subunits: alpha(3), beta(3), gamma(1), delta(1), epsilon(1). CF(0) has three main subunits: a, b and c.

The protein localises to the cell inner membrane. Functionally, produces ATP from ADP in the presence of a proton gradient across the membrane. This chain is ATP synthase epsilon chain (atpC), found in Aquifex aeolicus (strain VF5).